The sequence spans 317 residues: COP9 signalosome complex subunit 6a (317 aa).

Residues 30-164 (TQLNPPASIC…VTIYESELHV (135 aa)) form the MPN domain.

The protein belongs to the peptidase M67A family. CSN6 subfamily. Component of the CSN complex, probably composed of CSN1, CSN2, CSN3, CSN4, CSN5 (CSN5A or CSN5B), CSN6 (CSN6A or CSN6B), CSN7 and CSN8. Interacts with itself. In the complex, it probably interacts directly with CSN4 and CSN5A or CSN5B. Interacts with CSN7 (via C-terminal tail). Binds to the translation initiation factors TIF3E1.

It is found in the cytoplasm. The protein localises to the nucleus. Its function is as follows. Component of the COP9 signalosome complex (CSN), a complex involved in various cellular and developmental processes such as photomorphogenesis and auxin and jasmonate responses. The CSN complex is an essential regulator of the ubiquitin (Ubl) conjugation pathway by mediating the deneddylation of the cullin subunits of SCF-type E3 ligase complexes, leading to decrease the Ubl ligase activity of SCF. It is involved in repression of photomorphogenesis in darkness by regulating the activity of COP1-containing Ubl ligase complexes. The complex is also required for degradation of PSIAA6 by regulating the activity of the Ubl ligase SCF-TIR complex. Essential for the structural integrity of the CSN holocomplex. The protein is COP9 signalosome complex subunit 6a of Arabidopsis thaliana (Mouse-ear cress).